A 558-amino-acid polypeptide reads, in one-letter code: Glutamine--tRNA ligase (558 aa).

Positions 36–46 (PEPNGYLHLGH) match the 'HIGH' region motif. ATP-binding positions include 37 to 39 (EPN) and 43 to 49 (HLGHAKS). Aspartate 69 and tyrosine 214 together coordinate L-glutamine. ATP-binding positions include threonine 233, 263–264 (RL), and 271–273 (LSK). A 'KMSKS' region motif is present at residues 270–274 (LLSKR).

Belongs to the class-I aminoacyl-tRNA synthetase family. In terms of assembly, monomer.

The protein resides in the cytoplasm. It catalyses the reaction tRNA(Gln) + L-glutamine + ATP = L-glutaminyl-tRNA(Gln) + AMP + diphosphate. In Nitrobacter hamburgensis (strain DSM 10229 / NCIMB 13809 / X14), this protein is Glutamine--tRNA ligase.